The sequence spans 1819 residues: Non-reducing polyketide synthase nscA (1819 aa).

The N-terminal acylcarrier protein transacylase domain (SAT) stretch occupies residues 25-277; the sequence is RRLDQHSKDR…PLPVYDGLCH (253 aa). The Ketosynthase family 3 (KS3) domain occupies 413–846; that stretch reads SSKLAIVGMA…GGNTTLLLED (434 aa). Residues C586, H721, and H764 each act as for beta-ketoacyl synthase activity in the active site. The malonyl-CoA:ACP transacylase (MAT) domain stretch occupies residues 952–1249; it reads FTSQGAYYHG…MIPSAPAMSS (298 aa). The product template (PT) domain stretch occupies residues 1339–1658; sequence TSLVHQITAE…RLLMDRFFSP (320 aa). The tract at residues 1343-1479 is N-terminal hotdog fold; that stretch reads HQITAETVEA…AMIRFEDPMA (137 aa). The region spanning 1343-1653 is the PKS/mFAS DH domain; it reads HQITAETVEA…IRRVPRLLMD (311 aa). H1375 functions as the Proton acceptor; for dehydratase activity in the catalytic mechanism. The tract at residues 1507–1653 is C-terminal hotdog fold; it reads ASRLSKPLAY…IRRVPRLLMD (147 aa). The Proton donor; for dehydratase activity role is filled by D1564. The tract at residues 1703–1742 is disordered; the sequence is SSTMASKAPEPAPLLATSSESSTPKESPIVTPAESEREDP. Over residues 1719 to 1730 the composition is skewed to low complexity; sequence TSSESSTPKESP. Positions 1742–1819 constitute a Carrier domain; that stretch reads PVDNNMISQC…EMTAWIEEYC (78 aa). The residue at position 1779 (S1779) is an O-(pantetheine 4'-phosphoryl)serine.

It depends on pantetheine 4'-phosphate as a cofactor.

The protein operates within secondary metabolite biosynthesis. Functionally, non-reducing polyketide synthase; part of the gene cluster that mediates the biosynthesis of neosartoricin B, a prenylated anthracenone that probably exhibits T-cell antiproliferative activity, suggestive of a physiological role as an immunosuppressive agent. The non-reducing polyketide synthase nscA probably synthesizes and cyclizes the decaketide backbone. The hydrolase nscB then mediates the product release through hydrolysis followed by spontaneous decarboxylation. The prenyltransferase nscD catalyzes the addition of the dimethylallyl group to the aromatic C5. The FAD-dependent monooxygenase nscC is then responsible for the stereospecific hydroxylation at C2. Neosartoricin B can be converted into two additional compounds neosartoricins C and D. Neosartoricin C is a spirocyclic compound that is cyclized through the attack of C3 hydroxyl on C14, followed by dehydration. On the other hand, neosartoricin D is a further cyclized compound in which attack of C2 on C14 in neosartoricin C results in the formation of the acetal-containing dioxabicyclo-octanone ring. Both of these compounds are novel and possibly represent related metabolites of the gene cluster. The polypeptide is Non-reducing polyketide synthase nscA (Trichophyton verrucosum (strain HKI 0517)).